The primary structure comprises 247 residues: Adenosylcobinamide-GDP ribazoletransferase (247 aa).

The next 6 helical transmembrane spans lie at Ile31 to Ile51, Leu55 to Leu75, Ile109 to Ile129, Leu135 to Thr155, Val183 to Ile203, and Ala227 to Val247.

It belongs to the CobS family. Requires Mg(2+) as cofactor.

It localises to the cell inner membrane. It catalyses the reaction alpha-ribazole + adenosylcob(III)inamide-GDP = adenosylcob(III)alamin + GMP + H(+). The enzyme catalyses alpha-ribazole 5'-phosphate + adenosylcob(III)inamide-GDP = adenosylcob(III)alamin 5'-phosphate + GMP + H(+). It participates in cofactor biosynthesis; adenosylcobalamin biosynthesis; adenosylcobalamin from cob(II)yrinate a,c-diamide: step 7/7. Joins adenosylcobinamide-GDP and alpha-ribazole to generate adenosylcobalamin (Ado-cobalamin). Also synthesizes adenosylcobalamin 5'-phosphate from adenosylcobinamide-GDP and alpha-ribazole 5'-phosphate. The chain is Adenosylcobinamide-GDP ribazoletransferase from Acinetobacter baumannii (strain ACICU).